Consider the following 132-residue polypeptide: tRNA (cytidine(56)-2'-O)-methyltransferase (132 aa).

S-adenosyl-L-methionine-binding positions include leucine 35, 65–69 (GSEKV), and 83–90 (IGNQPHSE).

Belongs to the aTrm56 family. Homodimer.

The protein resides in the cytoplasm. It catalyses the reaction cytidine(56) in tRNA + S-adenosyl-L-methionine = 2'-O-methylcytidine(56) in tRNA + S-adenosyl-L-homocysteine + H(+). Specifically catalyzes the AdoMet-dependent 2'-O-ribose methylation of cytidine at position 56 in tRNAs. This is tRNA (cytidine(56)-2'-O)-methyltransferase from Sulfolobus acidocaldarius (strain ATCC 33909 / DSM 639 / JCM 8929 / NBRC 15157 / NCIMB 11770).